The following is a 587-amino-acid chain: Formate--tetrahydrofolate ligase (587 aa).

Position 73 to 80 (73 to 80) interacts with ATP; it reads TPLGEGKS.

This sequence belongs to the formate--tetrahydrofolate ligase family.

It catalyses the reaction (6S)-5,6,7,8-tetrahydrofolate + formate + ATP = (6R)-10-formyltetrahydrofolate + ADP + phosphate. It participates in one-carbon metabolism; tetrahydrofolate interconversion. The chain is Formate--tetrahydrofolate ligase from Syntrophobacter fumaroxidans (strain DSM 10017 / MPOB).